The sequence spans 841 residues: DNA ligase (841 aa).

NAD(+) is bound by residues 54–58 (DAEYD), 103–104 (SL), and Glu-143. Lys-145 serves as the catalytic N6-AMP-lysine intermediate. Positions 166, 203, 321, and 345 each coordinate NAD(+). Positions 471, 474, 489, and 495 each coordinate Zn(2+). Residues 554 to 575 (KTVAESDQMPSEGSSVGASGKH) form a disordered region. Positions 561-570 (QMPSEGSSVG) are enriched in polar residues. The BRCT domain maps to 764 to 841 (GINKAVAGKT…SEAELLTLLG (78 aa)).

The protein belongs to the NAD-dependent DNA ligase family. LigA subfamily. Requires Mg(2+) as cofactor. Mn(2+) serves as cofactor.

The catalysed reaction is NAD(+) + (deoxyribonucleotide)n-3'-hydroxyl + 5'-phospho-(deoxyribonucleotide)m = (deoxyribonucleotide)n+m + AMP + beta-nicotinamide D-nucleotide.. Functionally, DNA ligase that catalyzes the formation of phosphodiester linkages between 5'-phosphoryl and 3'-hydroxyl groups in double-stranded DNA using NAD as a coenzyme and as the energy source for the reaction. It is essential for DNA replication and repair of damaged DNA. This Neisseria meningitidis serogroup C / serotype 2a (strain ATCC 700532 / DSM 15464 / FAM18) protein is DNA ligase.